The primary structure comprises 619 residues: Dihydroxy-acid dehydratase (619 aa).

Aspartate 81 contacts Mg(2+). Cysteine 122 contacts [2Fe-2S] cluster. Mg(2+) is bound by residues aspartate 123 and lysine 124. Lysine 124 is subject to N6-carboxylysine. Position 198 (cysteine 198) interacts with [2Fe-2S] cluster. Mg(2+) is bound at residue glutamate 494. Serine 520 acts as the Proton acceptor in catalysis.

Belongs to the IlvD/Edd family. Homodimer. [2Fe-2S] cluster serves as cofactor. Mg(2+) is required as a cofactor.

It carries out the reaction (2R)-2,3-dihydroxy-3-methylbutanoate = 3-methyl-2-oxobutanoate + H2O. It catalyses the reaction (2R,3R)-2,3-dihydroxy-3-methylpentanoate = (S)-3-methyl-2-oxopentanoate + H2O. Its pathway is amino-acid biosynthesis; L-isoleucine biosynthesis; L-isoleucine from 2-oxobutanoate: step 3/4. It functions in the pathway amino-acid biosynthesis; L-valine biosynthesis; L-valine from pyruvate: step 3/4. Its function is as follows. Functions in the biosynthesis of branched-chain amino acids. Catalyzes the dehydration of (2R,3R)-2,3-dihydroxy-3-methylpentanoate (2,3-dihydroxy-3-methylvalerate) into 2-oxo-3-methylpentanoate (2-oxo-3-methylvalerate) and of (2R)-2,3-dihydroxy-3-methylbutanoate (2,3-dihydroxyisovalerate) into 2-oxo-3-methylbutanoate (2-oxoisovalerate), the penultimate precursor to L-isoleucine and L-valine, respectively. This Neisseria meningitidis serogroup C / serotype 2a (strain ATCC 700532 / DSM 15464 / FAM18) protein is Dihydroxy-acid dehydratase.